Consider the following 217-residue polypeptide: Large ribosomal subunit protein uL1 (217 aa).

It belongs to the universal ribosomal protein uL1 family. Part of the 50S ribosomal subunit.

In terms of biological role, binds directly to 23S rRNA. Probably involved in E site tRNA release. Protein L1 is also a translational repressor protein, it controls the translation of its operon by binding to its mRNA. In Thermoplasma acidophilum (strain ATCC 25905 / DSM 1728 / JCM 9062 / NBRC 15155 / AMRC-C165), this protein is Large ribosomal subunit protein uL1.